Here is a 289-residue protein sequence, read N- to C-terminus: MTLKVKGEGLGAQVTGVDPKNLDDITTDEIRDIVYTNKLVVLKDVHPSPREFIKLGRIIGQIVPYYEPMYHHEDHPEIFVSSTEEGQGVPKTGAFWHIDYMFMPEPFAFSMVLPLAVPGHDRGTYFIDLARVWQSLPAAKRDPARGTVSTHDPRRHIKIRPSDVYRPIGEVWDEINRTTPPIKWPTVIRHPKTGQEILYICATGTTKIEDKDGNPVDPEVLQELMAATGQLDPEYQSPFIHTQHYQVGDIILWDNRVLMHRAKHGSAAGTLTTYRLTMLDGLKTPGYAA.

3 residues coordinate a (3R)-3-[(carboxymethyl)amino]fatty acid: tyrosine 65, tyrosine 70, and glycine 93. Fe(2+)-binding residues include histidine 97 and aspartate 99. 2 residues coordinate a (3R)-3-[(carboxymethyl)amino]fatty acid: tyrosine 100 and lysine 158. Residue histidine 260 coordinates Fe(2+). Histidine 264 lines the 2-oxoglutarate pocket. Residue arginine 275 participates in a (3R)-3-[(carboxymethyl)amino]fatty acid binding.

It belongs to the TfdA dioxygenase family. Requires Fe(2+) as cofactor.

The enzyme catalyses a (3R)-3-[(carboxymethyl)amino]fatty acid + 2 2-oxoglutarate + 2 O2 = a (3R)-3-isocyanyl-fatty acid + 2 succinate + 3 CO2 + 2 H2O. It catalyses the reaction a (3R)-3-[(carboxymethyl)amino]fatty acid + 2-oxoglutarate + O2 = a (3R)-3-{[carboxy(hydroxy)methyl]amino}fatty acid + succinate + CO2. It carries out the reaction a (3R)-3-{[carboxy(hydroxy)methyl]amino}fatty acid + 2-oxoglutarate + O2 = a (3R)-3-isocyanyl-fatty acid + succinate + 2 CO2 + 2 H2O. Involved in the biosynthesis of a unique class of isonitrile lipopeptides (INLPs) that seem to play a role in metal acquisition. Catalyzes the conversion of (3R)-3-[(carboxymethyl)amino]fatty acids to (3R)-3-isocyanyl-fatty acids through an oxidative decarboxylation mechanism, thereby generating the isonitrile group of INLPs. This Mycobacterium bovis (strain ATCC BAA-935 / AF2122/97) protein is (3R)-3-[(carboxymethyl)amino]fatty acid oxygenase/decarboxylase.